Here is a 146-residue protein sequence, read N- to C-terminus: Large ribosomal subunit protein uL23m (146 aa).

The segment at 108–146 (PDLFPEKEPTSPDPLEEELPQQRQSSDPRCPGIPSWFGL) is disordered.

The protein belongs to the universal ribosomal protein uL23 family. Component of the mitochondrial ribosome large subunit (39S) which comprises a 16S rRNA and about 50 distinct proteins.

The protein localises to the mitochondrion. In Rattus norvegicus (Rat), this protein is Large ribosomal subunit protein uL23m (Mrpl23).